The primary structure comprises 172 residues: Large ribosomal subunit protein uL10 (172 aa).

The protein belongs to the universal ribosomal protein uL10 family. In terms of assembly, part of the ribosomal stalk of the 50S ribosomal subunit. The N-terminus interacts with L11 and the large rRNA to form the base of the stalk. The C-terminus forms an elongated spine to which L12 dimers bind in a sequential fashion forming a multimeric L10(L12)X complex.

In terms of biological role, forms part of the ribosomal stalk, playing a central role in the interaction of the ribosome with GTP-bound translation factors. This Chlamydia trachomatis serovar A (strain ATCC VR-571B / DSM 19440 / HAR-13) protein is Large ribosomal subunit protein uL10.